The chain runs to 295 residues: 4-hydroxy-3-methylbut-2-enyl diphosphate reductase (295 aa).

Cys12 lines the [4Fe-4S] cluster pocket. The (2E)-4-hydroxy-3-methylbut-2-enyl diphosphate site is built by His43 and His81. Dimethylallyl diphosphate contacts are provided by His43 and His81. Residues His43 and His81 each coordinate isopentenyl diphosphate. Position 103 (Cys103) interacts with [4Fe-4S] cluster. His131 lines the (2E)-4-hydroxy-3-methylbut-2-enyl diphosphate pocket. His131 lines the dimethylallyl diphosphate pocket. His131 is a binding site for isopentenyl diphosphate. The active-site Proton donor is Glu133. Thr171 contacts (2E)-4-hydroxy-3-methylbut-2-enyl diphosphate. Cys199 is a [4Fe-4S] cluster binding site. (2E)-4-hydroxy-3-methylbut-2-enyl diphosphate-binding residues include Ser227, Asn229, and Ser272. The dimethylallyl diphosphate site is built by Ser227, Asn229, and Ser272. Residues Ser227, Asn229, and Ser272 each coordinate isopentenyl diphosphate.

It belongs to the IspH family. Requires [4Fe-4S] cluster as cofactor.

It carries out the reaction isopentenyl diphosphate + 2 oxidized [2Fe-2S]-[ferredoxin] + H2O = (2E)-4-hydroxy-3-methylbut-2-enyl diphosphate + 2 reduced [2Fe-2S]-[ferredoxin] + 2 H(+). The enzyme catalyses dimethylallyl diphosphate + 2 oxidized [2Fe-2S]-[ferredoxin] + H2O = (2E)-4-hydroxy-3-methylbut-2-enyl diphosphate + 2 reduced [2Fe-2S]-[ferredoxin] + 2 H(+). It participates in isoprenoid biosynthesis; dimethylallyl diphosphate biosynthesis; dimethylallyl diphosphate from (2E)-4-hydroxy-3-methylbutenyl diphosphate: step 1/1. It functions in the pathway isoprenoid biosynthesis; isopentenyl diphosphate biosynthesis via DXP pathway; isopentenyl diphosphate from 1-deoxy-D-xylulose 5-phosphate: step 6/6. Catalyzes the conversion of 1-hydroxy-2-methyl-2-(E)-butenyl 4-diphosphate (HMBPP) into a mixture of isopentenyl diphosphate (IPP) and dimethylallyl diphosphate (DMAPP). Acts in the terminal step of the DOXP/MEP pathway for isoprenoid precursor biosynthesis. The polypeptide is 4-hydroxy-3-methylbut-2-enyl diphosphate reductase (Symbiobacterium thermophilum (strain DSM 24528 / JCM 14929 / IAM 14863 / T)).